The sequence spans 311 residues: Replicative helicase loader DnaI (311 aa).

Positions 1 to 136 (MEPIGRSLQG…LGATFQQVDI (136 aa)) are N-terminal domain (Nd). Zn(2+) contacts are provided by Cys67, Cys70, His84, and Cys101. Residues 137–311 (SDPSRLAMFQ…RLDGENRRHP (175 aa)) are C-terminal domain (Cd). 168–175 (GKFGVGKT) serves as a coordination point for ATP.

The protein belongs to the DnaI family. In terms of assembly, the DNA replisome assembles sequentially on oriC in this order; DnaA, DnaD, DnaB, DnaI-DnaC helicase. Monomer with a very minor amount of dimer in solution. Interacts with replicative helicase (from G.stearothermophilus, called DnaB); this interaction is disrupted by DnaD. Interacts with replicative helicase DnaC, forms a DnaC(6):DnaI(6) complex. Interacts with the helicase as 3 dimers. A stable complex with DnaG primase, DnaI(6):helicase(6):DnaG(3) fragment can be isolated; DnaI and DnaG do not contact each other (helicase and DnaG in this complex are derived from G.stearothermophilus). It depends on Zn(2+) as a cofactor.

It is found in the cytoplasm. It carries out the reaction ATP + H2O = ADP + phosphate + H(+). In terms of biological role, helps load the DnaC replicative helicase onto single-stranded (ss)DNA and simulates the helicase activity; in the presence of DnaB more helicase activity is seen. Regulates DnaC helicase activity, at low concentrations stimulates the DNA helicase and ATPase activities of DnaC. Has no measurable ATPase activity after 1 hour incubation of 6 uM DnaI with or without DNA. Another group has found the protein has weak ATPase activity that is not stimulated by ssDNA. Whole protein binds forked DNA (but not ssDNA) weakly; ATP and ADPNP (probably 5'-adenylyl beta, gamma-imidodiphosphate) have no effect on DNA binding. DnaB, DnaD and DnaI may be required for a PriA-independent pathway of replication fork restart. This Bacillus subtilis (strain 168) protein is Replicative helicase loader DnaI.